Reading from the N-terminus, the 170-residue chain is tRNA-splicing endonuclease (170 aa).

Catalysis depends on residues Tyr110, His116, and Lys147.

The protein belongs to the tRNA-intron endonuclease family. Archaeal short subfamily. In terms of assembly, homotetramer; although the tetramer contains four active sites, only two participate in the cleavage. Therefore, it should be considered as a dimer of dimers.

The enzyme catalyses pretRNA = a 3'-half-tRNA molecule with a 5'-OH end + a 5'-half-tRNA molecule with a 2',3'-cyclic phosphate end + an intron with a 2',3'-cyclic phosphate and a 5'-hydroxyl terminus.. Functionally, endonuclease that removes tRNA introns. Cleaves pre-tRNA at the 5'- and 3'-splice sites to release the intron. The products are an intron and two tRNA half-molecules bearing 2',3' cyclic phosphate and 5'-OH termini. Recognizes a pseudosymmetric substrate in which 2 bulged loops of 3 bases are separated by a stem of 4 bp. This Pyrococcus horikoshii (strain ATCC 700860 / DSM 12428 / JCM 9974 / NBRC 100139 / OT-3) protein is tRNA-splicing endonuclease.